Consider the following 155-residue polypeptide: Ribosome maturation factor RimP (155 aa).

The protein belongs to the RimP family.

Its subcellular location is the cytoplasm. Its function is as follows. Required for maturation of 30S ribosomal subunits. The polypeptide is Ribosome maturation factor RimP (Prochlorococcus marinus (strain MIT 9211)).